We begin with the raw amino-acid sequence, 176 residues long: ATP-dependent protease subunit HslV (176 aa).

Thr-2 is an active-site residue. 3 residues coordinate Na(+): Gly-157, Cys-160, and Thr-163.

This sequence belongs to the peptidase T1B family. HslV subfamily. A double ring-shaped homohexamer of HslV is capped on each side by a ring-shaped HslU homohexamer. The assembly of the HslU/HslV complex is dependent on binding of ATP.

It localises to the cytoplasm. It carries out the reaction ATP-dependent cleavage of peptide bonds with broad specificity.. Allosterically activated by HslU binding. Functionally, protease subunit of a proteasome-like degradation complex believed to be a general protein degrading machinery. The chain is ATP-dependent protease subunit HslV from Pseudomonas fluorescens (strain SBW25).